Consider the following 235-residue polypeptide: MSNTPIELKGSSFTLSVVHLHEAEPEVIRQALEDKIAQAPAFLKHAPVVINVSGLESPVNWPELHKIVTSTGLRIIGVSGCKDTSLKVEIDRMGLPLLTEGKEKAVRPAPVEPATPSEPPQNANPITKTRLIDVPVRSGQRIYAPQCDLIVTSHVSAGAELIADGNIHVYGMMRGRALAGASGDREAQIFCTHLTAELVSIAGVYWLSDKIPAEFYGKAARLRLADNALTVQPLN.

Residues 104–125 (KAVRPAPVEPATPSEPPQNANP) form a disordered region. The segment covering 110–119 (PVEPATPSEP) has biased composition (pro residues).

Belongs to the MinC family. Interacts with MinD and FtsZ.

Functionally, cell division inhibitor that blocks the formation of polar Z ring septums. Rapidly oscillates between the poles of the cell to destabilize FtsZ filaments that have formed before they mature into polar Z rings. Prevents FtsZ polymerization. The chain is Probable septum site-determining protein MinC from Salmonella enteritidis PT4 (strain P125109).